Reading from the N-terminus, the 188-residue chain is Chitin synthase 1 (188 aa).

The protein belongs to the chitin synthase family. Class I subfamily.

Its subcellular location is the cell membrane. The enzyme catalyses [(1-&gt;4)-N-acetyl-beta-D-glucosaminyl](n) + UDP-N-acetyl-alpha-D-glucosamine = [(1-&gt;4)-N-acetyl-beta-D-glucosaminyl](n+1) + UDP + H(+). Functionally, polymerizes chitin, a structural polymer of the cell wall and septum, by transferring the sugar moiety of UDP-GlcNAc to the non-reducing end of the growing chitin polymer. The polypeptide is Chitin synthase 1 (CHS1) (Ajellomyces dermatitidis (Blastomyces dermatitidis)).